The chain runs to 206 residues: Outer-membrane lipoprotein carrier protein (206 aa).

The N-terminal stretch at 1–21 (MKKLLCAVLLSPLLYSNAVLA) is a signal peptide.

It belongs to the LolA family. Monomer.

It localises to the periplasm. Participates in the translocation of lipoproteins from the inner membrane to the outer membrane. Only forms a complex with a lipoprotein if the residue after the N-terminal Cys is not an aspartate (The Asp acts as a targeting signal to indicate that the lipoprotein should stay in the inner membrane). The protein is Outer-membrane lipoprotein carrier protein of Shewanella sp. (strain MR-7).